Consider the following 373-residue polypeptide: Lipoyl amidotransferase LIPT1, mitochondrial (373 aa).

Residues 1–25 (MLIPFSMKNCFQLLCNCQVPAAGFK) constitute a mitochondrion transit peptide. In terms of domain architecture, BPL/LPL catalytic spans 57-243 (LEGKPILFFW…EYAAYHQIDN (187 aa)). Positions 107, 151, 161, and 179 each coordinate (R)-lipoyl-5'-AMP.

It belongs to the LplA family. Highly expressed in skeletal muscle and heart, moderately in kidney and pancreas, and detected at lower levels in liver, brain, placenta and lung.

The protein resides in the mitochondrion. The catalysed reaction is N(6)-[(R)-lipoyl]-L-lysyl-[glycine-cleavage complex H protein] + L-lysyl-[lipoyl-carrier protein] = L-lysyl-[glycine-cleavage complex H protein] + N(6)-[(R)-lipoyl]-L-lysyl-[lipoyl-carrier protein]. It catalyses the reaction (R)-lipoyl-5'-AMP + L-lysyl-[lipoyl-carrier protein] = N(6)-[(R)-lipoyl]-L-lysyl-[lipoyl-carrier protein] + AMP + 2 H(+). The protein operates within protein modification; protein lipoylation via exogenous pathway; protein N(6)-(lipoyl)lysine from lipoate: step 2/2. Lipoyl amidotransferase that catalyzes the transfer of lipoyl moieties from lipoyl-protein H of the glycine cleavage system (lipoyl-GCSH) to E2 subunits of the pyruvate dehydrogenase complex (PDCE2). Unable to catalyze the transfer of octanoyl from octanoyl-GCSH to PDCE2. In vitro, it is also able to catalyze the transfer of the lipoyl group from lipoyl-AMP to the specific lysine residue of lipoyl domains of lipoate-dependent enzymes but this reaction may not be physiologically relevant. This chain is Lipoyl amidotransferase LIPT1, mitochondrial, found in Homo sapiens (Human).